The sequence spans 471 residues: ATP-dependent RNA helicase DBP5 (471 aa).

Residues 1–15 (MSATEPTKEPAKEEV) show a composition bias toward basic and acidic residues. A disordered region spans residues 1–39 (MSATEPTKEPAKEEVAEQSTVAQAQVDGSGEPANGSPLT). The Q motif motif lies at 64-92 (QSFEELQLSEELLKGVRNMNFRKPSKIQE). Residues 97 to 265 (LLLMNPPTNM…NKFAPNSNVL (169 aa)) form the Helicase ATP-binding domain. 110 to 117 (SQSGTGKT) serves as a coordination point for ATP. The short motif at 212 to 215 (DEAD) is the DEAD box element. The 178-residue stretch at 276–453 (GIKQLYIDID…NVEEMIQKII (178 aa)) folds into the Helicase C-terminal domain.

Belongs to the DEAD box helicase family. DDX19/DBP5 subfamily. Associates with the nuclear pore complex.

The protein resides in the cytoplasm. Its subcellular location is the nucleus. It localises to the nuclear pore complex. The protein localises to the nucleus membrane. The enzyme catalyses ATP + H2O = ADP + phosphate + H(+). ATP-dependent RNA helicase associated with the nuclear pore complex and essential for mRNA export from the nucleus. May participate in a terminal step of mRNA export through the removal of proteins that accompany mRNA through the nucleopore complex. May also be involved in early transcription. This Phaeosphaeria nodorum (strain SN15 / ATCC MYA-4574 / FGSC 10173) (Glume blotch fungus) protein is ATP-dependent RNA helicase DBP5 (DBP5).